A 281-amino-acid chain; its full sequence is Putrescine transport system permease protein PotI (281 aa).

Topologically, residues 1–13 (MNNLPVVRSPWRI) are cytoplasmic. A helical transmembrane segment spans residues 14-33 (VILLLGFTFLYAPMLMLVIY). The Periplasmic portion of the chain corresponds to 34–68 (SFNSSKLVTVWAGWSTRWYGELLRDDAMMSAVGLS). One can recognise an ABC transmembrane type-1 domain in the interval 65-260 (VGLSLTIAAC…GAVGIVGFIA (196 aa)). Residues 69-88 (LTIAACAATAAAILGTIAAV) traverse the membrane as a helical segment. Residues 89 to 115 (VLVRFGRFRGSNGFAFMITAPLVMPDV) are Cytoplasmic-facing. The chain crosses the membrane as a helical span at residues 116–135 (ITGLSLLLLFVALAHAIGWP). Topologically, residues 136–140 (ADRGM) are periplasmic. Residues 141-160 (LTIWLAHVTFCTAYVAVVIS) traverse the membrane as a helical segment. At 161–186 (SRLRELDRSIEEAAMDLGATPLKVFF) the chain is on the cytoplasmic side. Residues 187–206 (VITLPMIMPAIISGWLLAFT) traverse the membrane as a helical segment. Residues 207–243 (LSLDDLVIASFVSGPGATTLPMLVFSSVRMGVNPEIN) are Periplasmic-facing. Residues 244–263 (ALATLILGAVGIVGFIAWYL) traverse the membrane as a helical segment. The Cytoplasmic portion of the chain corresponds to 264–281 (MARAEKQRIRDIQRARRG).

This sequence belongs to the binding-protein-dependent transport system permease family. CysTW subfamily. In terms of assembly, the complex is composed of two ATP-binding proteins (PotG), two transmembrane proteins (PotH and PotI) and a solute-binding protein (PotF).

It localises to the cell inner membrane. Its function is as follows. Part of the ABC transporter complex PotFGHI involved in putrescine uptake. Responsible for the translocation of the substrate across the membrane. The sequence is that of Putrescine transport system permease protein PotI from Escherichia coli O6:H1 (strain CFT073 / ATCC 700928 / UPEC).